A 1031-amino-acid chain; its full sequence is Caprin-2 (1031 aa).

Disordered stretches follow at residues 1 to 27 (MKSA…QSTL), 364 to 458 (LQEE…SWEN), 500 to 520 (PKDV…LPKD), 605 to 658 (DQAS…SSEA), and 830 to 876 (RSGT…SMTP). Composition is skewed to polar residues over residues 425 to 439 (VSVQ…SWTT) and 446 to 458 (ASVQ…SWEN). The span at 608 to 646 (SSGSETEFTTSETPEMVVSPCKPKPASALASPNPPLSKS) shows a compositional bias: low complexity. The segment covering 830–853 (RSGTSSGLQANSRAGWSDSSQVSS) has biased composition (polar residues). Residues serine 852 and serine 853 each carry the phosphoserine modification. Residues 897-1031 (PQQMRVAFSA…TFSGYLLYQD (135 aa)) form the C1q domain. Ca(2+) contacts are provided by aspartate 982 and glutamate 988.

This sequence belongs to the caprin family. In terms of assembly, homotrimer; via C1q domain. Found in a complex with LRP6, CCNY and CDK14 during G2/M stage; CAPRIN2 functions as a scaffold for the complex by binding to CCNY via its N terminus and to CDK14 via its C terminus. Interacts with LRP5. Interacts with LRP6. In terms of tissue distribution, specifically expressed in brain (at protein level).

It is found in the cytoplasm. It localises to the cell membrane. Its function is as follows. Promotes phosphorylation of the Wnt coreceptor LRP6, leading to increased activity of the canonical Wnt signaling pathway. Facilitates constitutive LRP6 phosphorylation by CDK14/CCNY during G2/M stage of the cell cycle, which may potentiate cells for Wnt signaling. May regulate the transport and translation of mRNAs, modulating for instance the expression of proteins involved in synaptic plasticity in neurons. Involved in regulation of growth as erythroblasts shift from a highly proliferative state towards their terminal phase of differentiation. May be involved in apoptosis. The chain is Caprin-2 from Mus musculus (Mouse).